The sequence spans 326 residues: uncharacterized protein (326 aa).

The next 2 membrane-spanning stretches (helical) occupy residues 9 to 29 (WVVL…RWSL) and 33 to 53 (ISIC…ANSY). NADP(+) contacts are provided by Asp-120, Asn-148, Tyr-214, Lys-218, and Thr-252. Residue Tyr-214 is the Proton acceptor of the active site. The active-site Lowers pKa of active site Tyr is Lys-218.

This sequence belongs to the short-chain dehydrogenases/reductases (SDR) family.

The protein localises to the mitochondrion membrane. In terms of biological role, involved in the resistance to DNA-damaging agents. This is an uncharacterized protein from Saccharomyces cerevisiae (strain ATCC 204508 / S288c) (Baker's yeast).